A 243-amino-acid polypeptide reads, in one-letter code: Probable septum site-determining protein MinC (243 aa).

It belongs to the MinC family. In terms of assembly, interacts with MinD and FtsZ.

Functionally, cell division inhibitor that blocks the formation of polar Z ring septums. Rapidly oscillates between the poles of the cell to destabilize FtsZ filaments that have formed before they mature into polar Z rings. Prevents FtsZ polymerization. In Agathobacter rectalis (strain ATCC 33656 / DSM 3377 / JCM 17463 / KCTC 5835 / VPI 0990) (Eubacterium rectale), this protein is Probable septum site-determining protein MinC.